The primary structure comprises 150 residues: Large ribosomal subunit protein bL9 (150 aa).

The protein belongs to the bacterial ribosomal protein bL9 family.

Binds to the 23S rRNA. This is Large ribosomal subunit protein bL9 from Paraburkholderia xenovorans (strain LB400).